A 226-amino-acid chain; its full sequence is Orotidine 5'-phosphate decarboxylase (226 aa).

Substrate-binding positions include aspartate 8, lysine 30, 58–67 (DLKIHDIPNT), threonine 117, arginine 177, glutamine 186, glycine 206, and arginine 207. Lysine 60 functions as the Proton donor in the catalytic mechanism.

It belongs to the OMP decarboxylase family. Type 1 subfamily. Homodimer.

The catalysed reaction is orotidine 5'-phosphate + H(+) = UMP + CO2. It participates in pyrimidine metabolism; UMP biosynthesis via de novo pathway; UMP from orotate: step 2/2. Its function is as follows. Catalyzes the decarboxylation of orotidine 5'-monophosphate (OMP) to uridine 5'-monophosphate (UMP). The polypeptide is Orotidine 5'-phosphate decarboxylase (Campylobacter jejuni subsp. doylei (strain ATCC BAA-1458 / RM4099 / 269.97)).